We begin with the raw amino-acid sequence, 305 residues long: UDP-3-O-acyl-N-acetylglucosamine deacetylase (305 aa).

Zn(2+) contacts are provided by histidine 79, histidine 238, and aspartate 242. Histidine 265 serves as the catalytic Proton donor.

It belongs to the LpxC family. Requires Zn(2+) as cofactor.

It carries out the reaction a UDP-3-O-[(3R)-3-hydroxyacyl]-N-acetyl-alpha-D-glucosamine + H2O = a UDP-3-O-[(3R)-3-hydroxyacyl]-alpha-D-glucosamine + acetate. It participates in glycolipid biosynthesis; lipid IV(A) biosynthesis; lipid IV(A) from (3R)-3-hydroxytetradecanoyl-[acyl-carrier-protein] and UDP-N-acetyl-alpha-D-glucosamine: step 2/6. Its function is as follows. Catalyzes the hydrolysis of UDP-3-O-myristoyl-N-acetylglucosamine to form UDP-3-O-myristoylglucosamine and acetate, the committed step in lipid A biosynthesis. This Klebsiella pneumoniae (strain 342) protein is UDP-3-O-acyl-N-acetylglucosamine deacetylase.